We begin with the raw amino-acid sequence, 1291 residues long: Cytoplasmic FMR1-interacting protein (1291 aa).

The tract at residues 1270-1291 is disordered; the sequence is PSVISSSSHYQDPQKLRQSINN. Polar residues predominate over residues 1271–1291; the sequence is SVISSSSHYQDPQKLRQSINN.

It belongs to the CYFIP family. As to quaternary structure, interacts with Fmr1 and Rac1. Component of the WAVE complex composed of Hem/Kette, Scar/Wave and Cyfip where it binds through its C-terminus directly to Hem. As to expression, in the embryo, expressed mainly in the gut and in the developing central nervous system where high levels of expression are found in the CNS neuropile. Expression in the gut diminishes as development proceeds (at protein level). In the adult, expressed specifically in the nervous system.

The protein localises to the cytoplasm. Plays a role in guidance and morphology of central and peripheral axons and in synaptic morphology. Also required for formation of cell membrane protrusions and for bristle development. Plays a role in regulating mitochondrial activity, energy metabolism and membrane potential which maintains normal gamma-aminobutyric acid (GABA) signaling and ensures normal social behavior. This is Cytoplasmic FMR1-interacting protein from Drosophila melanogaster (Fruit fly).